A 202-amino-acid polypeptide reads, in one-letter code: Securin (202 aa).

A2 carries the N-acetylalanine modification. The segment at 35–90 (LDGRSQVSTPRFGKTFDAPPALPKATRKALGTVNRATEKSVKTKGPLKQKQPSFSA) is disordered. Residues 61–64 (RKAL) carry the D-box motif. 2 short sequence motifs (TEK-box) span residues 71–73 (TEK) and 94–96 (TEK). Positions 163 to 173 (PPSPVKMPSPP) match the SH3-binding motif. S165 is subject to Phosphoserine; by CDK1.

The protein belongs to the securin family. As to quaternary structure, interacts with RPS10 and DNAJA1. Interacts with the caspase-like ESPL1, and prevents its protease activity probably by covering its active site. Interacts with TP53 and blocks its activity probably by blocking its binding to DNA. Interacts with the Ku 70 kDa subunit of ds-DNA kinase. Interacts with PTTG1IP. Post-translationally, phosphorylated at Ser-165 by CDK1 during mitosis. Phosphorylated in vitro by ds-DNA kinase. In terms of processing, ubiquitinated through 'Lys-11' linkage of ubiquitin moieties by the anaphase promoting complex (APC) at the onset of anaphase, conducting to its degradation. 'Lys-11'-linked ubiquitination is mediated by the E2 ligase UBE2C/UBCH10. In terms of tissue distribution, expressed at low level in most tissues, except in adult testis, where it is highly expressed. Overexpressed in many patients suffering from pituitary adenomas, primary epithelial neoplasias, and esophageal cancer.

The protein resides in the cytoplasm. The protein localises to the nucleus. Regulatory protein, which plays a central role in chromosome stability, in the p53/TP53 pathway, and DNA repair. Probably acts by blocking the action of key proteins. During the mitosis, it blocks Separase/ESPL1 function, preventing the proteolysis of the cohesin complex and the subsequent segregation of the chromosomes. At the onset of anaphase, it is ubiquitinated, conducting to its destruction and to the liberation of ESPL1. Its function is however not limited to a blocking activity, since it is required to activate ESPL1. Negatively regulates the transcriptional activity and related apoptosis activity of TP53. The negative regulation of TP53 may explain the strong transforming capability of the protein when it is overexpressed. May also play a role in DNA repair via its interaction with Ku, possibly by connecting DNA damage-response pathways with sister chromatid separation. The sequence is that of Securin (PTTG1) from Homo sapiens (Human).